Reading from the N-terminus, the 722-residue chain is Glycine--tRNA ligase beta subunit (722 aa).

This sequence belongs to the class-II aminoacyl-tRNA synthetase family. As to quaternary structure, tetramer of two alpha and two beta subunits.

Its subcellular location is the cytoplasm. The enzyme catalyses tRNA(Gly) + glycine + ATP = glycyl-tRNA(Gly) + AMP + diphosphate. This Haemophilus influenzae (strain 86-028NP) protein is Glycine--tRNA ligase beta subunit.